We begin with the raw amino-acid sequence, 157 residues long: Histidine-containing phosphotransfer protein 5 (157 aa).

The residue at position 1 (Met-1) is an N-acetylmethionine. The HPt domain occupies 41–148 (TPDFVAEVVS…NLEKQILQAG (108 aa)). The residue at position 83 (His-83) is a Phosphohistidine.

Interacts with the B-type response regulators ARR1 and ARR2. Binds to AHK2, AHK3, AHK4 and AHK5. In terms of processing, two-component system major event consists of a His-to-Asp phosphorelay between a sensor histidine kinase (HK) and a response regulator (RR). In plants, the His-to-Asp phosphorelay involves an additional intermediate named Histidine-containing phosphotransfer protein (HPt). This multistep phosphorelay consists of a His-Asp-His-Asp sequential transfer of a phosphate group between first a His and an Asp of the HK protein, followed by the transfer to a conserved His of the HPt protein and finally the transfer to an Asp in the receiver domain of the RR protein. As to expression, expressed in the whole plant.

It localises to the cytoplasm. The protein resides in the cytosol. Its subcellular location is the nucleus. In terms of biological role, functions as a two-component phosphorelay mediator between cytokinin sensor histidine kinases and response regulators (B-type ARRs). Plays an important role in propagating cytokinin signal transduction through the multistep His-to-Asp phosphorelay. The chain is Histidine-containing phosphotransfer protein 5 (AHP5) from Arabidopsis thaliana (Mouse-ear cress).